A 436-amino-acid chain; its full sequence is Proteasome-activating nucleotidase (436 aa).

Positions 7–98 form a coiled coil; sequence KDVRDLCEKF…LRSDLQRMKK (92 aa). ATP contacts are provided by residues 223-228 and His-362; that span reads GTGKTL. Positions 434–436 are docks into pockets in the proteasome alpha-ring to cause gate opening; the sequence is AYH.

The protein belongs to the AAA ATPase family. In terms of assembly, homohexamer. The hexameric complex has a two-ring architecture resembling a top hat that caps the 20S proteasome core at one or both ends. Upon ATP-binding, the C-terminus of PAN interacts with the alpha-rings of the proteasome core by binding to the intersubunit pockets.

It localises to the cytoplasm. ATPase which is responsible for recognizing, binding, unfolding and translocation of substrate proteins into the archaeal 20S proteasome core particle. Is essential for opening the gate of the 20S proteasome via an interaction with its C-terminus, thereby allowing substrate entry and access to the site of proteolysis. Thus, the C-termini of the proteasomal ATPase function like a 'key in a lock' to induce gate opening and therefore regulate proteolysis. Unfolding activity requires energy from ATP hydrolysis, whereas ATP binding alone promotes ATPase-20S proteasome association which triggers gate opening, and supports translocation of unfolded substrates. In Methanopyrus kandleri (strain AV19 / DSM 6324 / JCM 9639 / NBRC 100938), this protein is Proteasome-activating nucleotidase.